The sequence spans 480 residues: Type VI lipase adapter protein Tla3 (480 aa).

The disordered stretch occupies residues 410-458 (ISSPTPGKKPVHDPFGVDLLPQTASGDGPPPSADPVAPASRLTTRLPPG).

In terms of assembly, interacts with the Tle3 toxin on one side and with the H2-T6SS component VgrG2b on the other side.

The protein resides in the cytoplasm. Functionally, adapter protein that targets and loads the Tle3 toxin onto the H2 type VI secretion system (H2-T6SS) machinery through an interaction with the TTR domain of VgrG2b. Seems specific for Tle3. This Pseudomonas aeruginosa (strain ATCC 15692 / DSM 22644 / CIP 104116 / JCM 14847 / LMG 12228 / 1C / PRS 101 / PAO1) protein is Type VI lipase adapter protein Tla3.